The sequence spans 231 residues: Cuticlin 2 (231 aa).

An N-terminal signal peptide occupies residues 1–16 (MQKLIVFFTTIAAAQA). Repeat copies occupy residues 75–78 (AAPI), 79–82 (AAPA), 90–93 (AAPV), 105–108 (AAPI), 114–117 (AAPA), 121–124 (AAPV), 137–140 (AAPA), 153–156 (AAPA), 169–172 (AAPA), 192–195 (AAPA), 208–211 (AAPA), and 218–221 (AAPA). Residues 75-221 (AAPIAAPAGG…AGGYQAAAPA (147 aa)) form a 12 X 4 AA repeats of A-A-P-[AVI] region.

Tyrosine residues can be cross-linked in vitro, leading to the formation of insoluble high molecular-weight complexes.

Its subcellular location is the secreted. Component of the insoluble part of the cuticles. This Caenorhabditis elegans protein is Cuticlin 2.